Reading from the N-terminus, the 348-residue chain is Tripartite motif-containing protein 16-like protein (348 aa).

One can recognise a B30.2/SPRY domain in the interval 139–337 (YWTSKPEPST…RIVDLGEEPE (199 aa)).

The protein belongs to the TRIM/RBCC family.

The protein resides in the cytoplasm. This Homo sapiens (Human) protein is Tripartite motif-containing protein 16-like protein (TRIM16L).